Here is a 283-residue protein sequence, read N- to C-terminus: ATP phosphoribosyltransferase (283 aa).

Belongs to the ATP phosphoribosyltransferase family. Long subfamily. Mg(2+) serves as cofactor.

Its subcellular location is the cytoplasm. The enzyme catalyses 1-(5-phospho-beta-D-ribosyl)-ATP + diphosphate = 5-phospho-alpha-D-ribose 1-diphosphate + ATP. Its pathway is amino-acid biosynthesis; L-histidine biosynthesis; L-histidine from 5-phospho-alpha-D-ribose 1-diphosphate: step 1/9. Its activity is regulated as follows. Feedback inhibited by histidine. Its function is as follows. Catalyzes the condensation of ATP and 5-phosphoribose 1-diphosphate to form N'-(5'-phosphoribosyl)-ATP (PR-ATP). Has a crucial role in the pathway because the rate of histidine biosynthesis seems to be controlled primarily by regulation of HisG enzymatic activity. This chain is ATP phosphoribosyltransferase, found in Rhodococcus erythropolis (strain PR4 / NBRC 100887).